Consider the following 201-residue polypeptide: Small ribosomal subunit protein uS4 (201 aa).

The segment at 1–42 (MARYTGPVTRKSRRLGTDLVGGDQSFEKRPYPPGQHGRARIK) is disordered. An S4 RNA-binding domain is found at 91–157 (SRLDNVVYRA…VPFQIARETA (67 aa)).

This sequence belongs to the universal ribosomal protein uS4 family. As to quaternary structure, part of the 30S ribosomal subunit. Contacts protein S5. The interaction surface between S4 and S5 is involved in control of translational fidelity.

One of the primary rRNA binding proteins, it binds directly to 16S rRNA where it nucleates assembly of the body of the 30S subunit. Functionally, with S5 and S12 plays an important role in translational accuracy. This is Small ribosomal subunit protein uS4 from Mycobacterium ulcerans (strain Agy99).